A 424-amino-acid polypeptide reads, in one-letter code: GTPase Obg (424 aa).

Residues 1–158 (MFIDTAKIFV…RWIKLELKLL (158 aa)) enclose the Obg domain. The OBG-type G domain occupies 159–331 (ADVGLIGFPN…LMKEAARLLS (173 aa)). Residues 165 to 172 (GFPNVGKS), 190 to 194 (FTTLK), 212 to 215 (DIPG), 282 to 285 (NKSD), and 312 to 314 (SAA) each bind GTP. Residues Ser-172 and Thr-192 each coordinate Mg(2+). One can recognise an OCT domain in the interval 345 to 424 (RFIEEEKRFT…LNDFEFDFLL (80 aa)).

This sequence belongs to the TRAFAC class OBG-HflX-like GTPase superfamily. OBG GTPase family. Monomer. It depends on Mg(2+) as a cofactor.

The protein resides in the cytoplasm. Its function is as follows. An essential GTPase which binds GTP, GDP and possibly (p)ppGpp with moderate affinity, with high nucleotide exchange rates and a fairly low GTP hydrolysis rate. Plays a role in control of the cell cycle, stress response, ribosome biogenesis and in those bacteria that undergo differentiation, in morphogenesis control. The protein is GTPase Obg of Clostridium botulinum (strain Langeland / NCTC 10281 / Type F).